We begin with the raw amino-acid sequence, 553 residues long: Adenine deaminase 1 (553 aa).

It belongs to the metallo-dependent hydrolases superfamily. Adenine deaminase family. Requires Mn(2+) as cofactor.

It carries out the reaction adenine + H2O + H(+) = hypoxanthine + NH4(+). The sequence is that of Adenine deaminase 1 from Oenococcus oeni (strain ATCC BAA-331 / PSU-1).